We begin with the raw amino-acid sequence, 317 residues long: Melanocyte-stimulating hormone receptor (317 aa).

The Extracellular segment spans residues 1–37 (MPMQGAQRRLLGSLNSTPTATPNLGLAANHTGAPCLE). N-linked (GlcNAc...) asparagine glycosylation is present at asparagine 29. The chain crosses the membrane as a helical span at residues 38 to 63 (VSIPHGLFLSLGLVSLVENVLVVAAI). Residues 64–72 (AKNRNLHSP) are Cytoplasmic-facing. Residues 73–93 (MYCFICCLALSDLLVSGSNML) form a helical membrane-spanning segment. Over 94–118 (ETAVILLLEAGALATRASVVQQLQN) the chain is Extracellular. The helical transmembrane segment at 119-140 (TIDVLTCSSMLCSLCFLGAIAV) threads the bilayer. Residues 141–163 (DRYVSIFYALRYHSIVTLPRARR) lie on the Cytoplasmic side of the membrane. The helical transmembrane segment at 164 to 183 (AIAAIWVASVLSSTLFIAYC) threads the bilayer. Residues 184-191 (DHAAVLLC) lie on the Extracellular side of the membrane. The chain crosses the membrane as a helical span at residues 192-211 (LVVFFLAMLVLMAVLYVHML). At 212–240 (ARACQHAQGITRLHKRQLPAHQGFGLRGA) the chain is on the cytoplasmic side. The helical transmembrane segment at 241–266 (ATLTILLGIFFLCWGPFFLHLMLVVL) threads the bilayer. The Extracellular segment spans residues 267–279 (CPQHLTCSCIFKN). The chain crosses the membrane as a helical span at residues 280-300 (FKVFLTLIICNTIIDPLIYAF). Residues 301-317 (RSQELCRTLKEVLLCSW) are Cytoplasmic-facing. Cysteine 315 carries the S-palmitoyl cysteine lipid modification.

The protein belongs to the G-protein coupled receptor 1 family. In terms of assembly, interacts with MGRN1, but does not undergo MGRN1-mediated ubiquitination; this interaction competes with GNAS-binding and thus inhibits agonist-induced cAMP production. Interacts with OPN3; the interaction results in a decrease in MC1R-mediated cAMP signaling and ultimately a decrease in melanin production in melanocytes.

Its subcellular location is the cell membrane. In terms of biological role, receptor for MSH (alpha, beta and gamma) and ACTH. The activity of this receptor is mediated by G proteins which activate adenylate cyclase. Mediates melanogenesis, the production of eumelanin (black/brown) and phaeomelanin (red/yellow), via regulation of cAMP signaling in melanocytes. The sequence is that of Melanocyte-stimulating hormone receptor (MC1R) from Alouatta caraya (Black howler monkey).